A 122-amino-acid polypeptide reads, in one-letter code: MADRIGKPVSQRQLRVGEMIRQSLGMIFARNEAKVPNLETNTITVTEVKMSQDLKIAKAYVLPLGGKDSELVIKKLKECSFLIRKALSKKIIMKYLPKILFAKDDSFEYAEKIENLIKQTNK.

This sequence belongs to the RbfA family. In terms of assembly, monomer. Binds 30S ribosomal subunits, but not 50S ribosomal subunits or 70S ribosomes.

The protein resides in the cytoplasm. Functionally, one of several proteins that assist in the late maturation steps of the functional core of the 30S ribosomal subunit. Associates with free 30S ribosomal subunits (but not with 30S subunits that are part of 70S ribosomes or polysomes). Required for efficient processing of 16S rRNA. May interact with the 5'-terminal helix region of 16S rRNA. This Pelagibacter ubique (strain HTCC1062) protein is Ribosome-binding factor A.